A 213-amino-acid polypeptide reads, in one-letter code: Superoxide dismutase [Fe] (213 aa).

Residues histidine 28, histidine 82, aspartate 164, and histidine 168 each coordinate Fe cation.

The protein belongs to the iron/manganese superoxide dismutase family. Homotetramer. Requires Fe cation as cofactor.

It catalyses the reaction 2 superoxide + 2 H(+) = H2O2 + O2. In terms of biological role, destroys superoxide anion radicals which are normally produced within the cells and which are toxic to biological systems. The chain is Superoxide dismutase [Fe] (sodB) from Aquifex pyrophilus.